The primary structure comprises 349 residues: Zinc-type alcohol dehydrogenase-like protein PB24D3.08c (349 aa).

The protein belongs to the zinc-containing alcohol dehydrogenase family. Quinone oxidoreductase subfamily.

It is found in the cytoplasm. It localises to the nucleus. The sequence is that of Zinc-type alcohol dehydrogenase-like protein PB24D3.08c from Schizosaccharomyces pombe (strain 972 / ATCC 24843) (Fission yeast).